The primary structure comprises 206 residues: Cytochrome c oxidase assembly protein CtaG (206 aa).

At 1–22 the chain is on the cytoplasmic side; the sequence is MTEQPTNRNDVPRRGLGRDATV. Residues 23-43 traverse the membrane as a helical; Signal-anchor for type II membrane protein segment; sequence ASICGLVVALMVGASYAAVPF. Residues 44–206 are Periplasmic-facing; it reads YNWFCRATGF…GEPDSRKGAL (163 aa).

It belongs to the COX11/CtaG family.

Its subcellular location is the cell inner membrane. In terms of biological role, exerts its effect at some terminal stage of cytochrome c oxidase synthesis, probably by being involved in the insertion of the copper B into subunit I. The chain is Cytochrome c oxidase assembly protein CtaG from Rhodopseudomonas palustris (strain BisB18).